Here is a 235-residue protein sequence, read N- to C-terminus: Matrix protein (235 aa).

Belongs to the nucleorhabdovirus type-2 matrix protein family. In terms of assembly, homomultimer. Interacts with nucleoprotein and with the cytoplasmic domain of glycoprotein.

It localises to the virion membrane. Its subcellular location is the host endomembrane system. Its function is as follows. Plays a major role in assembly and budding of virion. Completely covers the ribonucleoprotein coil and keep it in condensed bullet-shaped form. Inhibits viral transcription and stimulates replication. This chain is Matrix protein (M), found in Colocasia esculenta (Wild taro).